A 205-amino-acid polypeptide reads, in one-letter code: Ras-related protein Rab-1A (205 aa).

The residue at position 2 (Ser-2) is an N-acetylserine. GTP-binding residues include Ser-20, Gly-21, Gly-23, Lys-24, Ser-25, Cys-26, Glu-38, and Thr-43. Residue Ser-25 coordinates Mg(2+). A Switch 1 motif is present at residues 34-48 (DTYTESYISTIGVDF). Position 43 (Thr-43) interacts with Mg(2+). Residues Lys-49 and Lys-61 each participate in a glycyl lysine isopeptide (Lys-Gly) (interchain with G-Cter in ubiquitin) cross-link. Residue Asp-66 participates in Mg(2+) binding. A Switch 2 motif is present at residues 66–83 (DTAGQERFRTITSSYYRG). Gly-69, Asn-124, Lys-125, Asp-127, Ala-155, and Lys-156 together coordinate GTP. Residues 178–205 (PGATAGGAEKSNVKIQSTPVKQSGGGCC) form a disordered region. Ser-194 carries the post-translational modification Phosphoserine; by CDK1. Residues Cys-204 and Cys-205 are each lipidated (S-geranylgeranyl cysteine).

The protein belongs to the small GTPase superfamily. Rab family. As to quaternary structure, may interact with YIPF5. Interacts with C9orf72; the interaction mediates recruitment of RAB1A to the ATG1/ULK1 kinase complex. Interacts with GDI1; this promotes dissociation from membranes. Requires Mg(2+) as cofactor. Post-translationally, phosphorylated by CDK1 kinase during mitosis. Ubiquitinated via 'Lys-11'-linked ubiquitination on Lys-49 and Lys-61; impairing the recruitment of guanosine diphosphate (GDP) dissociation inhibitor 1/GDI1.

It is found in the golgi apparatus. Its subcellular location is the endoplasmic reticulum. The protein localises to the early endosome. It localises to the cytoplasm. The protein resides in the cytosol. It is found in the membrane. Its subcellular location is the melanosome. It carries out the reaction GTP + H2O = GDP + phosphate + H(+). Regulated by guanine nucleotide exchange factors (GEFs) which promote the exchange of bound GDP for free GTP. Regulated by GTPase activating proteins (GAPs) which increase the GTP hydrolysis activity. Inhibited by GDP dissociation inhibitors (GDIs). Its function is as follows. The small GTPases Rab are key regulators of intracellular membrane trafficking, from the formation of transport vesicles to their fusion with membranes. Rabs cycle between an inactive GDP-bound form and an active GTP-bound form that is able to recruit to membranes different sets of downstream effectors directly responsible for vesicle formation, movement, tethering and fusion. RAB1A regulates vesicular protein transport from the endoplasmic reticulum (ER) to the Golgi compartment and on to the cell surface, and plays a role in IL-8 and growth hormone secretion. Required to modulate the compacted morphology of the Golgi. Regulates the level of CASR present at the cell membrane. Plays a role in cell adhesion and cell migration, via its role in protein trafficking. Plays a role in autophagosome assembly and cellular defense reactions against pathogenic bacteria. Plays a role in microtubule-dependent protein transport by early endosomes and in anterograde melanosome transport. The sequence is that of Ras-related protein Rab-1A (RAB1A) from Sus scrofa (Pig).